A 219-amino-acid polypeptide reads, in one-letter code: Octanoyltransferase (219 aa).

Residues 32–207 (ENSQDEIWIV…TLSQELGLDK (176 aa)) enclose the BPL/LPL catalytic domain. Substrate-binding positions include 71 to 78 (RGGQVTYH), 138 to 140 (SLG), and 151 to 153 (GLA). Cys-169 acts as the Acyl-thioester intermediate in catalysis.

Belongs to the LipB family.

The protein localises to the cytoplasm. The catalysed reaction is octanoyl-[ACP] + L-lysyl-[protein] = N(6)-octanoyl-L-lysyl-[protein] + holo-[ACP] + H(+). It functions in the pathway protein modification; protein lipoylation via endogenous pathway; protein N(6)-(lipoyl)lysine from octanoyl-[acyl-carrier-protein]: step 1/2. Its function is as follows. Catalyzes the transfer of endogenously produced octanoic acid from octanoyl-acyl-carrier-protein onto the lipoyl domains of lipoate-dependent enzymes. Lipoyl-ACP can also act as a substrate although octanoyl-ACP is likely to be the physiological substrate. The polypeptide is Octanoyltransferase (Shewanella pealeana (strain ATCC 700345 / ANG-SQ1)).